The following is a 304-amino-acid chain: Ribokinase (304 aa).

Residues 12–14 (NVD), 41–45 (GKGAN), and E142 contribute to the substrate site. Residues N186 and 222-227 (TLGKQG) each bind ATP. D248 and T250 together coordinate K(+). Residues 253-254 (GD) and N279 contribute to the ATP site. D254 contributes to the substrate binding site. D254 functions as the Proton acceptor in the catalytic mechanism. K(+)-binding residues include T285, K288, G290, and S294.

Belongs to the carbohydrate kinase PfkB family. Ribokinase subfamily. Homodimer. Mg(2+) is required as a cofactor.

The protein resides in the cytoplasm. The enzyme catalyses D-ribose + ATP = D-ribose 5-phosphate + ADP + H(+). The protein operates within carbohydrate metabolism; D-ribose degradation; D-ribose 5-phosphate from beta-D-ribopyranose: step 2/2. Activated by a monovalent cation that binds near, but not in, the active site. The most likely occupant of the site in vivo is potassium. Ion binding induces a conformational change that may alter substrate affinity. Catalyzes the phosphorylation of ribose at O-5 in a reaction requiring ATP and magnesium. The resulting D-ribose-5-phosphate can then be used either for sythesis of nucleotides, histidine, and tryptophan, or as a component of the pentose phosphate pathway. The chain is Ribokinase from Staphylococcus aureus (strain COL).